A 235-amino-acid polypeptide reads, in one-letter code: MTIIAGNFKANLTRIQVATFAKELDSILTDMQTSSHLQVDIFPSHTALLTNNFKHFHIGAQNAYFAQNGGFTGEIGLSQLQEFNINRLIIGHSERRTLFGENQDFINKKFRFYAEAGFEIYYCIGEPLSMRQKGKNALKDFLGAQLDGIDITYPKLIIAYEPIWAIGTGESATLEQIESTHSMLATFTSAPLLYGGSVNPTNAREILCTPYVNGVLVGSASLNIQSFTDIIRASK.

7–9 (NFK) lines the substrate pocket. His92 serves as the catalytic Electrophile. The active-site Proton acceptor is the Glu161. 2 residues coordinate substrate: Gly167 and Ser197.

This sequence belongs to the triosephosphate isomerase family. Homodimer.

Its subcellular location is the cytoplasm. The catalysed reaction is D-glyceraldehyde 3-phosphate = dihydroxyacetone phosphate. It functions in the pathway carbohydrate biosynthesis; gluconeogenesis. It participates in carbohydrate degradation; glycolysis; D-glyceraldehyde 3-phosphate from glycerone phosphate: step 1/1. In terms of biological role, involved in the gluconeogenesis. Catalyzes stereospecifically the conversion of dihydroxyacetone phosphate (DHAP) to D-glyceraldehyde-3-phosphate (G3P). This chain is Triosephosphate isomerase, found in Helicobacter hepaticus (strain ATCC 51449 / 3B1).